Here is a 294-residue protein sequence, read N- to C-terminus: Pyridoxal 5'-phosphate synthase subunit PdxS (294 aa).

Position 24 (Asp24) interacts with D-ribose 5-phosphate. Residue Lys81 is the Schiff-base intermediate with D-ribose 5-phosphate of the active site. Gly153 serves as a coordination point for D-ribose 5-phosphate. Arg165 contributes to the D-glyceraldehyde 3-phosphate binding site. D-ribose 5-phosphate-binding positions include Gly214 and 235-236; that span reads GS.

Belongs to the PdxS/SNZ family. In the presence of PdxT, forms a dodecamer of heterodimers.

The enzyme catalyses aldehydo-D-ribose 5-phosphate + D-glyceraldehyde 3-phosphate + L-glutamine = pyridoxal 5'-phosphate + L-glutamate + phosphate + 3 H2O + H(+). The protein operates within cofactor biosynthesis; pyridoxal 5'-phosphate biosynthesis. Catalyzes the formation of pyridoxal 5'-phosphate from ribose 5-phosphate (RBP), glyceraldehyde 3-phosphate (G3P) and ammonia. The ammonia is provided by the PdxT subunit. Can also use ribulose 5-phosphate and dihydroxyacetone phosphate as substrates, resulting from enzyme-catalyzed isomerization of RBP and G3P, respectively. In Anoxybacillus flavithermus (strain DSM 21510 / WK1), this protein is Pyridoxal 5'-phosphate synthase subunit PdxS.